The following is a 384-amino-acid chain: tRNA-specific 2-thiouridylase MnmA (384 aa).

ATP is bound by residues Ala-29–Ser-36 and Leu-55. Cys-123 (nucleophile) is an active-site residue. Cys-123 and Cys-220 are joined by a disulfide. Gly-147 provides a ligand contact to ATP. The segment at Arg-169 to Gln-171 is interaction with tRNA. Cys-220 (cysteine persulfide intermediate) is an active-site residue.

The protein belongs to the MnmA/TRMU family.

It is found in the cytoplasm. It catalyses the reaction S-sulfanyl-L-cysteinyl-[protein] + uridine(34) in tRNA + AH2 + ATP = 2-thiouridine(34) in tRNA + L-cysteinyl-[protein] + A + AMP + diphosphate + H(+). Functionally, catalyzes the 2-thiolation of uridine at the wobble position (U34) of tRNA, leading to the formation of s(2)U34. The sequence is that of tRNA-specific 2-thiouridylase MnmA from Dinoroseobacter shibae (strain DSM 16493 / NCIMB 14021 / DFL 12).